The following is an 89-amino-acid chain: uncharacterized protein (89 aa).

Residues 20 to 39 (SFAMTTYLNLFVKLLIFLYI) traverse the membrane as a helical segment.

The protein resides in the membrane. This is an uncharacterized protein from Escherichia coli (strain K12).